The primary structure comprises 227 residues: Translation initiation factor 6 (227 aa).

Belongs to the eIF-6 family.

In terms of biological role, binds to the 50S ribosomal subunit and prevents its association with the 30S ribosomal subunit to form the 70S initiation complex. This is Translation initiation factor 6 from Staphylothermus marinus (strain ATCC 43588 / DSM 3639 / JCM 9404 / F1).